A 198-amino-acid chain; its full sequence is Recombination protein RecR (198 aa).

A C4-type zinc finger spans residues 57–72 (CSICGRLTDDDPCSIC). The region spanning 80–175 (TTILVLEDSR…KVTRLARGLA (96 aa)) is the Toprim domain.

Belongs to the RecR family.

In terms of biological role, may play a role in DNA repair. It seems to be involved in an RecBC-independent recombinational process of DNA repair. It may act with RecF and RecO. This Streptococcus pneumoniae serotype 2 (strain D39 / NCTC 7466) protein is Recombination protein RecR.